The following is a 497-amino-acid chain: Probable cytosol aminopeptidase (497 aa).

Residues lysine 263 and aspartate 268 each contribute to the Mn(2+) site. Lysine 275 is a catalytic residue. Residues aspartate 286, aspartate 345, and glutamate 347 each contribute to the Mn(2+) site. Arginine 349 is a catalytic residue.

It belongs to the peptidase M17 family. Requires Mn(2+) as cofactor.

It localises to the cytoplasm. The enzyme catalyses Release of an N-terminal amino acid, Xaa-|-Yaa-, in which Xaa is preferably Leu, but may be other amino acids including Pro although not Arg or Lys, and Yaa may be Pro. Amino acid amides and methyl esters are also readily hydrolyzed, but rates on arylamides are exceedingly low.. The catalysed reaction is Release of an N-terminal amino acid, preferentially leucine, but not glutamic or aspartic acids.. Its function is as follows. Presumably involved in the processing and regular turnover of intracellular proteins. Catalyzes the removal of unsubstituted N-terminal amino acids from various peptides. The protein is Probable cytosol aminopeptidase of Methylorubrum populi (strain ATCC BAA-705 / NCIMB 13946 / BJ001) (Methylobacterium populi).